The chain runs to 102 residues: Large ribosomal subunit protein bL21 (102 aa).

It belongs to the bacterial ribosomal protein bL21 family. Part of the 50S ribosomal subunit. Contacts protein L20.

This protein binds to 23S rRNA in the presence of protein L20. This chain is Large ribosomal subunit protein bL21, found in Bifidobacterium animalis subsp. lactis (strain AD011).